Here is a 446-residue protein sequence, read N- to C-terminus: Rhamnogalacturonase A (446 aa).

An N-terminal signal peptide occupies residues 1-18 (MPALPILALALAPLLVNG). Cysteine 39 and cysteine 65 are joined by a disulfide. N-linked (GlcNAc...) asparagine glycosylation is found at asparagine 50, asparagine 115, and asparagine 124. The active-site Proton donor is aspartate 216. Cysteine 218 and cysteine 235 are oxidised to a cystine. N-linked (GlcNAc...) asparagine glycosylation is found at asparagine 236, asparagine 281, and asparagine 318. 2 disulfide bridges follow: cysteine 341–cysteine 347 and cysteine 369–cysteine 378.

This sequence belongs to the glycosyl hydrolase 28 family.

The protein resides in the secreted. It carries out the reaction Endohydrolysis of alpha-D-GalA-(1-&gt;2)-alpha-L-Rha glycosidic bond in the rhamnogalacturonan I backbone with initial inversion of anomeric configuration releasing oligosaccharides with beta-D-GalA at the reducing end.. Pectinolytic enzymes consist of four classes of enzymes: pectine lyase, polygalacturonase, pectin methylesterase and rhamnogalacturonase. Hydrolyzes alpha-D-galacturonopyranosyl-(1,2)-alpha-L-rhamnopyranosyl linkages in the backbone of the hairy regions of pectins. The sequence is that of Rhamnogalacturonase A (rhgA) from Aspergillus niger.